A 1011-amino-acid chain; its full sequence is PE-PGRS family protein PE_PGRS30 (1011 aa).

One can recognise a PE domain in the interval 1-93 (MSFLLVEPDL…AAAYTGAEAA (93 aa)). Residues 130-696 (SNAGGNGGPG…GGTGGTGGVL (567 aa)) are PGRS domain. Residues 595–696 (GGAGGTGGDH…GGTGGTGGVL (102 aa)) are compositionally biased toward gly residues. Residues 595–701 (GGAGGTGGDH…TGGVLFGQSG (107 aa)) are disordered. A C-terminal domain region spans residues 697-1011 (FGQSGSSGPP…PTQLAQAIAP (315 aa)).

This sequence belongs to the mycobacterial PE family. PGRS subfamily.

Its subcellular location is the secreted. The protein localises to the cell wall. It localises to the cell surface. Its function is as follows. Mediates suppression of pro-inflammatory immune response in macrophages via modulation of host cytokine response. Required for full virulence. Involved in inhibition of phago-lysosome fusion. The sequence is that of PE-PGRS family protein PE_PGRS30 from Mycobacterium tuberculosis (strain ATCC 25618 / H37Rv).